A 203-amino-acid chain; its full sequence is Glycerol-3-phosphate acyltransferase (203 aa).

4 helical membrane-spanning segments follow: residues 6 to 26, 82 to 102, 118 to 138, and 141 to 161; these read LTLLMIVAAYLAGSVSSAVLV, AISLGLIAIAACLGHIYPIFF, APIGDDLAICLMASWVVLVLI, and YSSLAAIITALLAPLYTWWLD.

Belongs to the PlsY family. Probably interacts with PlsX.

Its subcellular location is the cell inner membrane. The enzyme catalyses an acyl phosphate + sn-glycerol 3-phosphate = a 1-acyl-sn-glycero-3-phosphate + phosphate. It participates in lipid metabolism; phospholipid metabolism. In terms of biological role, catalyzes the transfer of an acyl group from acyl-phosphate (acyl-PO(4)) to glycerol-3-phosphate (G3P) to form lysophosphatidic acid (LPA). This enzyme utilizes acyl-phosphate as fatty acyl donor, but not acyl-CoA or acyl-ACP. The chain is Glycerol-3-phosphate acyltransferase from Shewanella sp. (strain MR-4).